We begin with the raw amino-acid sequence, 842 residues long: MSSKQEIMDDQRFRRVSKDPRFWEMPEKDRKVKIDKRFRAMFHDKKFKLNYAVDKRGRPISHSTTEDLKRFYDLSDSDSDLSDEESKVLDEKRVKEKKKQTKKETKSKTPIEEKKKETKKTDQKDSINKNDLNNSERIQKMKNSHKSPKIDSEVSPKDSEESLQSRKKKRDTTDLSVEASPKGKLRTKDPSTSAMVKSSTVSGSKAKREKQAVIMAKDNAGRMLHEEAPEEDSDSASELGRDEESEGEITSDDRASADDDENEDEEEEEDGEEEEEEEEEEDESDDESDSGPDLARGKGNVETSSEDEDDLADLFPEEPGFEHAWRELDKDAPRADEITRRLAVCNMDWDRLKAKDLLALFNSFKPKGGVVFSVKIYPSEFGKQRMKEEQIQGPVELLSIPEDAPEKDWASREKLRDYQFKRLKYYYAVVECDSPETASKIYEDCDGLEFESSCSFIDLRFIPDDITFDDEPKDAASEVDLTAYKPKYFTSAAMGTSTVEITWDETDHERITTLNRKFKKDELLDMDFEAYLASSSEDEEEVEEAPEGEDGVSIEDGKTKKSQKDDEEQIAKYRQLLQVIQEKEKKGKENDMEMEIKWVPGLKESAEEMVKNKLEGKDKLTPWEQFLEKKKEKKRLKKKQKALAEEASEDEIPSDVDLNDPYFAEEVKKIGIKKKSMKSAKDGATSEEETELEKQKAEMALLVMDEEEDSKKHFNYDKIVEHQNLSKKKKKQLMKKKELLEDDFEVNVSDARFQAMYTSHLFNLDPSDPNFKKTKAMEKILEEKARHREQKEERLIQAVERAQQDTGKPAQKQPMDPALSMLIKSVKNKTEQFQARKKQRIK.

N-acetylserine is present on S2. 2 disordered regions span residues 54–317 (DKRG…LFPE) and 534–568 (SSSE…DDEE). Over residues 64-73 (TTEDLKRFYD) the composition is skewed to basic and acidic residues. S75, S77, S79, and S82 each carry phosphoserine. Basic and acidic residues-rich tracts occupy residues 84–94 (EESKVLDEKRV) and 102–128 (KKET…DSIN). 4 positions are modified to phosphoserine: S135, S155, S180, and S198. Residues 148 to 164 (PKIDSEVSPKDSEESLQ) show a composition bias toward basic and acidic residues. The span at 190 to 203 (PSTSAMVKSSTVSG) shows a compositional bias: polar residues. Acidic residues-rich tracts occupy residues 228-250 (APEE…GEIT) and 258-290 (DDDE…ESDS). 2 positions are modified to phosphoserine: S288 and S290. A Phosphothreonine modification is found at T303. A phosphoserine mark is found at S304 and S305. Acidic residues-rich tracts occupy residues 304 to 316 (SSED…DLFP) and 536 to 553 (SEDE…DGVS). The segment covering 555–564 (EDGKTKKSQK) has biased composition (basic and acidic residues). S605 bears the Phosphoserine mark. Basic residues predominate over residues 631 to 641 (KEKKRLKKKQK). Disordered stretches follow at residues 631–657 (KEKK…SDVD) and 674–693 (KKSM…TELE). Residues 646 to 657 (EASEDEIPSDVD) are compositionally biased toward acidic residues. Phosphoserine occurs at positions 648, 654, 686, and 726. Residues 772 to 804 (KKTKAMEKILEEKARHREQKEERLIQAVERAQQ) are a coiled coil. The span at 785–795 (ARHREQKEERL) shows a compositional bias: basic and acidic residues. The segment at 785–816 (ARHREQKEERLIQAVERAQQDTGKPAQKQPMD) is disordered.

It belongs to the ESF1 family. Interacts with ABT1. Forms a complex with ABT1 and suppresses the ABT1-induced activation of polymerase II-directed transcription in mammalian cells. Disrupts the interaction between ABT1 and TATA-binding protein (TBP), and suppresses the ABT1-induced activation of polymerase II-directed basal transcription in vitro. Ubiquitously expressed.

It localises to the nucleus. The protein resides in the nucleolus. The protein localises to the nucleoplasm. May constitute a novel regulatory system for basal transcription. Negatively regulates ABT1. The sequence is that of ESF1 homolog (Esf1) from Rattus norvegicus (Rat).